We begin with the raw amino-acid sequence, 348 residues long: Cylicin-2 (348 aa).

Positions 25-347 (KKSWNQQHFA…DEKKDAKKKG (323 aa)) are 31 X 3 AA repeats of K-K-X. Disordered regions lie at residues 35-59 (LLFP…DNTV) and 101-348 (PTRT…KKGK). 4 stretches are compositionally biased toward basic and acidic residues: residues 103–159 (RTVE…DAKK), 166–217 (KDAE…EKDS), 238–267 (KADE…AKEI), and 276–342 (KPSS…EKKD). Tandem repeats lie at residues 157-184 (AKKD…EKGG), 185-212 (AKKD…EKGG), and 213-240 (TEKD…VKAD). A 3 X approximate tandem repeats region spans residues 157 to 240 (AKKDSKKGKK…AIELQAVKAD (84 aa)).

In terms of tissue distribution, testis.

It is found in the cytoplasm. The protein resides in the cytoskeleton. Its subcellular location is the perinuclear theca. The protein localises to the calyx. Functionally, plays a role in the establishment of normal sperm morphology during spermatogenesis. It is required for acrosome attachment to the nuclear envelope, and proper manchette elongation and disassembly. This is Cylicin-2 (CYLC2) from Homo sapiens (Human).